The sequence spans 126 residues: Small ribosomal subunit protein uS13 (126 aa).

Residues 94–126 are disordered; the sequence is GLPVRGQKTRNNAHTVKGKPKAAIAGKKKNKVN. Residues 109 to 126 show a composition bias toward basic residues; the sequence is VKGKPKAAIAGKKKNKVN.

It belongs to the universal ribosomal protein uS13 family. As to quaternary structure, part of the 30S ribosomal subunit. Forms a loose heterodimer with protein S19. Forms two bridges to the 50S subunit in the 70S ribosome.

Functionally, located at the top of the head of the 30S subunit, it contacts several helices of the 16S rRNA. In the 70S ribosome it contacts the 23S rRNA (bridge B1a) and protein L5 of the 50S subunit (bridge B1b), connecting the 2 subunits; these bridges are implicated in subunit movement. Contacts the tRNAs in the A and P-sites. The polypeptide is Small ribosomal subunit protein uS13 (Aster yellows witches'-broom phytoplasma (strain AYWB)).